The primary structure comprises 808 residues: Bifunctional uridylyltransferase/uridylyl-removing enzyme (808 aa).

Residues 1–315 (MEAESPCAAS…ALVRRPKRRP (315 aa)) form a uridylyltransferase region. The interval 316–609 (LDEGVVEYAG…EISPRDGERI (294 aa)) is uridylyl-removing. The HD domain occupies 430–544 (VDRHVVETAV…LEVLHALSEA (115 aa)). ACT domains lie at 610-686 (DAVI…GMLQ) and 730-805 (ILEV…VDEP).

Belongs to the GlnD family. Mg(2+) serves as cofactor.

It carries out the reaction [protein-PII]-L-tyrosine + UTP = [protein-PII]-uridylyl-L-tyrosine + diphosphate. It catalyses the reaction [protein-PII]-uridylyl-L-tyrosine + H2O = [protein-PII]-L-tyrosine + UMP + H(+). Functionally, modifies, by uridylylation and deuridylylation, the PII regulatory protein (GlnB), in response to the nitrogen status of the cell that GlnD senses through the glutamine level. Under low glutamine levels, catalyzes the conversion of the PII protein and UTP to PII-UMP and PPi, while under higher glutamine levels, GlnD hydrolyzes PII-UMP to PII and UMP (deuridylylation). Thus, controls uridylylation state and activity of the PII protein, and plays an important role in the regulation of nitrogen assimilation and metabolism. This chain is Bifunctional uridylyltransferase/uridylyl-removing enzyme, found in Mycobacterium tuberculosis (strain CDC 1551 / Oshkosh).